Reading from the N-terminus, the 133-residue chain is UPF0225 protein BPP1723 (133 aa).

It belongs to the UPF0225 family.

The chain is UPF0225 protein BPP1723 from Bordetella parapertussis (strain 12822 / ATCC BAA-587 / NCTC 13253).